The primary structure comprises 58 residues: Large ribosomal subunit protein bL32 (58 aa).

The protein belongs to the bacterial ribosomal protein bL32 family.

This Anaplasma marginale (strain Florida) protein is Large ribosomal subunit protein bL32.